The following is a 184-amino-acid chain: H(2)/formate:CoB-CoM heterodisulfide,ferredoxin reductase subunit C2 (184 aa).

2 4Fe-4S ferredoxin-type domains span residues 24 to 54 and 65 to 97; these read GEKEVASLKSCYQCGTCTGSCPSGRRTAYRT and IDSVLDSDDIWKCTTCYTCYERCPRDVKVTEII. Cys-34, Cys-37, Cys-40, Cys-44, Cys-77, Cys-80, Cys-83, and Cys-87 together coordinate [4Fe-4S] cluster.

The protein belongs to the HdrC family. The heterodisulfide reductase is composed of three subunits; HdrA, HdrB and HdrC. B1 and B2 subunits are interchangeable, as are the C1 and C2 subunits. The heterodisulfide reductase forms a supercomplex with formylmethanofuran dehydrogenase (Fwd), F(420)-non-reducing hydrogenase (Vhu) and formate dehydrogenase (Fdh). Requires [4Fe-4S] cluster as cofactor.

It catalyses the reaction coenzyme B + coenzyme M + 2 reduced [2Fe-2S]-[ferredoxin] + 2 H(+) = coenzyme M-coenzyme B heterodisulfide + 2 H2 + 2 oxidized [2Fe-2S]-[ferredoxin]. The catalysed reaction is coenzyme B + coenzyme M + 2 reduced [2Fe-2S]-[ferredoxin] + 2 CO2 = coenzyme M-coenzyme B heterodisulfide + 2 formate + 2 oxidized [2Fe-2S]-[ferredoxin]. It participates in cofactor metabolism; coenzyme M-coenzyme B heterodisulfide reduction; coenzyme B and coenzyme M from coenzyme M-coenzyme B heterodisulfide: step 1/1. Functionally, part of a complex that catalyzes the reversible reduction of CoM-S-S-CoB to the thiol-coenzymes H-S-CoM (coenzyme M) and H-S-CoB (coenzyme B). This is H(2)/formate:CoB-CoM heterodisulfide,ferredoxin reductase subunit C2 from Methanococcus maripaludis (strain DSM 14266 / JCM 13030 / NBRC 101832 / S2 / LL).